We begin with the raw amino-acid sequence, 391 residues long: Digeranylgeranylglycerophospholipid reductase (391 aa).

Residues glycine 13, glutamate 32, cysteine 43, alanine 44, glycine 46, arginine 97, alanine 121, aspartate 277, glycine 289, and isoleucine 290 each coordinate FAD.

Belongs to the geranylgeranyl reductase family. DGGGPL reductase subfamily. The cofactor is FAD.

The catalysed reaction is a 2,3-bis-O-phytanyl-sn-glycerol 1-phospholipid + 8 oxidized 2[4Fe-4S]-[ferredoxin] = a 2,3-bis-O-(geranylgeranyl)-sn-glycerol 1-phospholipid + 8 reduced 2[4Fe-4S]-[ferredoxin] + 16 H(+). The enzyme catalyses 2,3-bis-O-(phytanyl)-sn-glycerol 1-phosphate + 8 oxidized 2[4Fe-4S]-[ferredoxin] = 2,3-bis-O-(geranylgeranyl)-sn-glycerol 1-phosphate + 8 reduced 2[4Fe-4S]-[ferredoxin] + 16 H(+). It carries out the reaction a 2,3-bis-O-phytanyl-sn-glycerol 1-phospholipid + 8 A = a 2,3-bis-O-(geranylgeranyl)-sn-glycerol 1-phospholipid + 8 AH2. It catalyses the reaction CDP-2,3-bis-O-(geranylgeranyl)-sn-glycerol + 8 AH2 = CDP-2,3-bis-O-(phytanyl)-sn-glycerol + 8 A. The catalysed reaction is archaetidylserine + 8 AH2 = 2,3-bis-O-phytanyl-sn-glycero-3-phospho-L-serine + 8 A. The protein operates within membrane lipid metabolism; glycerophospholipid metabolism. In terms of biological role, is involved in the reduction of 2,3-digeranylgeranylglycerophospholipids (unsaturated archaeols) into 2,3-diphytanylglycerophospholipids (saturated archaeols) in the biosynthesis of archaeal membrane lipids. Catalyzes the formation of archaetidic acid (2,3-di-O-phytanyl-sn-glyceryl phosphate) from 2,3-di-O-geranylgeranylglyceryl phosphate (DGGGP) via the hydrogenation of each double bond of the isoprenoid chains. Is also probably able to reduce double bonds of geranyl groups in CDP-2,3-bis-O-(geranylgeranyl)-sn-glycerol and archaetidylserine, thus acting at various stages in the biosynthesis of archaeal membrane lipids. This Methanothrix thermoacetophila (strain DSM 6194 / JCM 14653 / NBRC 101360 / PT) (Methanosaeta thermophila) protein is Digeranylgeranylglycerophospholipid reductase.